A 261-amino-acid chain; its full sequence is Ribonuclease 3 (261 aa).

The RNase III domain maps to 20–144 (YFALYRMLGF…FIGAIYLDKG (125 aa)). Glutamate 62 provides a ligand contact to Mg(2+). The active site involves aspartate 66. Residues asparagine 130 and glutamate 133 each coordinate Mg(2+). Glutamate 133 is an active-site residue. In terms of domain architecture, DRBM spans 172 to 241 (NFKSKLFEWC…SQMTWRKIRT (70 aa)).

It belongs to the ribonuclease III family. Homodimer. Requires Mg(2+) as cofactor.

It localises to the cytoplasm. The enzyme catalyses Endonucleolytic cleavage to 5'-phosphomonoester.. Functionally, digests double-stranded RNA. Involved in the processing of primary rRNA transcript to yield the immediate precursors to the large and small rRNAs (23S and 16S). Processes some mRNAs, and tRNAs when they are encoded in the rRNA operon. Processes pre-crRNA and tracrRNA of type II CRISPR loci if present in the organism. The sequence is that of Ribonuclease 3 from Azobacteroides pseudotrichonymphae genomovar. CFP2.